The sequence spans 388 residues: Lipid-A-disaccharide synthase (388 aa).

Belongs to the LpxB family.

The enzyme catalyses a lipid X + a UDP-2-N,3-O-bis[(3R)-3-hydroxyacyl]-alpha-D-glucosamine = a lipid A disaccharide + UDP + H(+). It participates in bacterial outer membrane biogenesis; LPS lipid A biosynthesis. Condensation of UDP-2,3-diacylglucosamine and 2,3-diacylglucosamine-1-phosphate to form lipid A disaccharide, a precursor of lipid A, a phosphorylated glycolipid that anchors the lipopolysaccharide to the outer membrane of the cell. The chain is Lipid-A-disaccharide synthase from Sulfurihydrogenibium sp. (strain YO3AOP1).